An 855-amino-acid chain; its full sequence is tRNA(Met) cytidine acetyltransferase TmcA (855 aa).

ATP contacts are provided by residues Gln-260, 286–295, and Arg-438; that span reads GRGKSALLGI. The N-acetyltransferase domain maps to 480 to 663; sequence PDLRYWFEDP…GEYSVAVIRP (184 aa). Residues 590–592, 597–603, Glu-630, and Arg-637 each bind acetyl-CoA; these read IAT and MRHGLGS.

Belongs to the RNA cytidine acetyltransferase family. TmcA subfamily.

The protein resides in the cytoplasm. It catalyses the reaction cytidine(34) in elongator tRNA(Met) + acetyl-CoA + ATP + H2O = N(4)-acetylcytidine(34) in elongator tRNA(Met) + ADP + phosphate + CoA + H(+). Catalyzes the formation of N(4)-acetylcytidine (ac(4)C) at the wobble position of tRNA(Met), by using acetyl-CoA as an acetyl donor and ATP (or GTP). The sequence is that of tRNA(Met) cytidine acetyltransferase TmcA from Methanopyrus kandleri (strain AV19 / DSM 6324 / JCM 9639 / NBRC 100938).